Consider the following 125-residue polypeptide: MNDTPRVCVQVQSAYIESQSAPEEERYVFAYAVTIRNVGRIAVQLIGRYWLITNGNGRETEVQGEGVVGEQPHIEPGGEYQYTSGAVLETPIGTMQGHYQMIDADSENFRVEIPVFRLAIATHIH.

The region spanning 1-125 (MNDTPRVCVQ…FRLAIATHIH (125 aa)) is the ApaG domain.

In Erwinia tasmaniensis (strain DSM 17950 / CFBP 7177 / CIP 109463 / NCPPB 4357 / Et1/99), this protein is Protein ApaG.